The sequence spans 565 residues: Periplasmic trehalase (565 aa).

An N-terminal signal peptide occupies residues 1–30 (MKSPAPSRPQKMALIPACIFLCFAALSVQA). Substrate contacts are provided by residues R152, 159–160 (WD), N196, 205–207 (RSQ), 277–279 (RPE), and G310. Catalysis depends on proton donor/acceptor residues D312 and E496. E511 is a substrate binding site. Residues 538 to 565 (PCDNVPATRPTVKSATTQPSTKEAQPTP) are disordered. Over residues 548–565 (TVKSATTQPSTKEAQPTP) the composition is skewed to polar residues.

The protein belongs to the glycosyl hydrolase 37 family. Monomer.

Its subcellular location is the periplasm. The catalysed reaction is alpha,alpha-trehalose + H2O = alpha-D-glucose + beta-D-glucose. In terms of biological role, provides the cells with the ability to utilize trehalose at high osmolarity by splitting it into glucose molecules that can subsequently be taken up by the phosphotransferase-mediated uptake system. The chain is Periplasmic trehalase from Escherichia coli (strain K12 / MC4100 / BW2952).